A 236-amino-acid chain; its full sequence is SERTA domain-containing protein 1 (236 aa).

The SERTA domain occupies 38 to 85; it reads PTVASSSLFDLSVVKLHHSLRQSEPDLRHLVLVVNTLRRIQASMEPAP. Positions 190–211 are disordered; sequence ASEGLKPGPENGPAKEEPPELD.

Interacts with the PHD-bromodomain of TIF1, TRIM28/TIF1B and p300/CBP. Interacts with E2F1 and TFDP1; modulates transactivation activity of TFDP1/E2F complexes. Also interacts with CDK4. Post-translationally, polyubiquitinated, which promotes proteasomal degradation. In terms of tissue distribution, detected at in testis, lung and, at lower levels, in muscle, liver, spleen, brain and heart.

Functionally, acts at E2F-responsive promoters as coregulator to integrate signals provided by PHD- and/or bromodomain-containing transcription factors. Stimulates E2F1/TFDP1 transcriptional activity. Renders the activity of cyclin D1/CDK4 resistant to the inhibitory effects of CDKN2A/p16INK4A. The polypeptide is SERTA domain-containing protein 1 (Sertad1) (Mus musculus (Mouse)).